Here is a 1189-residue protein sequence, read N- to C-terminus: Tyrosine-protein phosphatase non-receptor type 14 (1189 aa).

Positions phenylalanine 21 to lysine 306 constitute an FERM domain. Phosphoserine occurs at positions 314, 461, 486, 591, 593, 594, and 646. The interval alanine 744–proline 775 is disordered. Residues serine 760–glycine 771 are compositionally biased toward polar residues. Phosphoserine is present on serine 833. The Tyrosine-protein phosphatase domain maps to valine 911–phenylalanine 1182. Cysteine 1123 functions as the Phosphocysteine intermediate in the catalytic mechanism. Substrate contacts are provided by residues cysteine 1123 to arginine 1129 and glutamine 1167.

It belongs to the protein-tyrosine phosphatase family. Non-receptor class subfamily. Interacts with FLT4; the interaction is enhanced by stimulation with VEGFC. Interacts (via PPxY motifs) with YAP1 (via WW domains); this interaction leads to the cytoplasmic sequestration of YAP1 and inhibits its transcriptional coactivator activity. Ubiquitinated by the ECS (Elongin BC-CUL2/5-SOCS-box protein)/LRR1 E3 ligase complex and subsequently targeted to proteasomal degradation. Thymus; in cells of both hematopoietic and non-hematopoietic origins.

It is found in the cytoplasm. The protein resides in the cytoskeleton. The protein localises to the nucleus. It catalyses the reaction O-phospho-L-tyrosyl-[protein] + H2O = L-tyrosyl-[protein] + phosphate. Functionally, protein tyrosine phosphatase which may play a role in the regulation of lymphangiogenesis, cell-cell adhesion, cell-matrix adhesion, cell migration, cell growth and also regulates TGF-beta gene expression, thereby modulating epithelial-mesenchymal transition. Mediates beta-catenin dephosphorylation at adhesion junctions. Acts as a negative regulator of the oncogenic property of YAP, a downstream target of the hippo pathway, in a cell density-dependent manner. May function as a tumor suppressor. In Mus musculus (Mouse), this protein is Tyrosine-protein phosphatase non-receptor type 14 (Ptpn14).